The sequence spans 512 residues: UDP-N-acetylmuramate--L-alanine ligase (512 aa).

132-138 (GAHGKTT) contacts ATP.

The protein belongs to the MurCDEF family.

The protein resides in the cytoplasm. It catalyses the reaction UDP-N-acetyl-alpha-D-muramate + L-alanine + ATP = UDP-N-acetyl-alpha-D-muramoyl-L-alanine + ADP + phosphate + H(+). Its pathway is cell wall biogenesis; peptidoglycan biosynthesis. In terms of biological role, cell wall formation. This chain is UDP-N-acetylmuramate--L-alanine ligase, found in Bifidobacterium longum (strain DJO10A).